The following is an 82-amino-acid chain: MLVLSRKINQSIVIGDNIEIMLVDIRGDQIKLGINAPKNVKIFRKEVYEEIESQNLEASKEATADKLNILSNFVKNKFGKKQ.

It belongs to the CsrA/RsmA family. As to quaternary structure, homodimer; the beta-strands of each monomer intercalate to form a hydrophobic core, while the alpha-helices form wings that extend away from the core.

The protein resides in the cytoplasm. Its function is as follows. A translational regulator that binds mRNA to regulate translation initiation and/or mRNA stability. Usually binds in the 5'-UTR at or near the Shine-Dalgarno sequence preventing ribosome-binding, thus repressing translation. Its main target seems to be the major flagellin gene, while its function is anatagonized by FliW. In Brachyspira hyodysenteriae (strain ATCC 49526 / WA1), this protein is Translational regulator CsrA.